A 354-amino-acid chain; its full sequence is Cyclin-D1-2 (354 aa).

Disordered regions lie at residues 37–74 (FFQQLQGPAPAVSSSPSTTTATAPAAAGSCDDGGEEEE) and 331–354 (TTATTAVSSEEVVSSSPPSKRRKM). Composition is skewed to low complexity over residues 44 to 66 (PAPAVSSSPSTTTATAPAAAGSC) and 331 to 346 (TTATTAVSSEEVVSSS).

It belongs to the cyclin family. Cyclin D subfamily.

In Oryza sativa subsp. japonica (Rice), this protein is Cyclin-D1-2 (CYCD1-2).